The chain runs to 148 residues: Ergosterol biosynthetic protein 28 (148 aa).

Topologically, residues 1 to 25 (MFSLQDVITTTKTTLAAMPKGYLPK) are cytoplasmic. A helical membrane pass occupies residues 26–46 (WLLFISIVSVFNSIQTYVSGL). At 47–92 (ELTRKVYERKPTETTHLSARTFGTWTFISCVIRFYGAMYLNEPHIF) the chain is on the lumenal side. A helical transmembrane segment spans residues 93–113 (ELVFMSYMVALFHFGSELLIF). Residues 114 to 120 (RTCKLGK) lie on the Cytoplasmic side of the membrane. Residues 121 to 136 (GFMGPLVVSTTSLVWM) traverse the membrane as a helical segment. The Lumenal portion of the chain corresponds to 137–148 (YKQREYYTGVAW).

It belongs to the ERG28 family. Heterotetramer of ERG25, ERG26, ERG27 and ERG28. ERG28 acts as a scaffold to tether ERG27 and other 4,4-demethylation-related enzymes, forming a demethylation enzyme complex, in the endoplasmic reticulum. Interacts with ERG25, ERG26 and ERG27. Also interacts with ERG1, ERG3, ERG5, ERG6 and ERG11.

The protein localises to the endoplasmic reticulum membrane. Functionally, part of the third module of ergosterol biosynthesis pathway that includes the late steps of the pathway. ERG28 has a role as a scaffold to help anchor the catalytic components of the C-4 demethylation complex ERG25, ERG26 and ERG27 to the endoplasmic reticulum. The third module or late pathway involves the ergosterol synthesis itself through consecutive reactions that mainly occur in the endoplasmic reticulum (ER) membrane. Firstly, the squalene synthase ERG9 catalyzes the condensation of 2 farnesyl pyrophosphate moieties to form squalene, which is the precursor of all steroids. Squalene synthase is crucial for balancing the incorporation of farnesyl diphosphate (FPP) into sterol and nonsterol isoprene synthesis. Secondly, the squalene epoxidase ERG1 catalyzes the stereospecific oxidation of squalene to (S)-2,3-epoxysqualene, which is considered to be a rate-limiting enzyme in steroid biosynthesis. Then, the lanosterol synthase ERG7 catalyzes the cyclization of (S)-2,3 oxidosqualene to lanosterol, a reaction that forms the sterol core. In the next steps, lanosterol is transformed to zymosterol through a complex process involving various demethylation, reduction and desaturation reactions. The lanosterol 14-alpha-demethylase ERG11 (also known as CYP51) catalyzes C14-demethylation of lanosterol to produce 4,4'-dimethyl cholesta-8,14,24-triene-3-beta-ol, which is critical for ergosterol biosynthesis. The C-14 reductase ERG24 reduces the C14=C15 double bond of 4,4-dimethyl-cholesta-8,14,24-trienol to produce 4,4-dimethyl-cholesta-8,24-dienol. 4,4-dimethyl-cholesta-8,24-dienol is substrate of the C-4 demethylation complex ERG25-ERG26-ERG27 in which ERG25 catalyzes the three-step monooxygenation required for the demethylation of 4,4-dimethyl and 4alpha-methylsterols, ERG26 catalyzes the oxidative decarboxylation that results in a reduction of the 3-beta-hydroxy group at the C-3 carbon to an oxo group, and ERG27 is responsible for the reduction of the keto group on the C-3. ERG28 has a role as a scaffold to help anchor ERG25, ERG26 and ERG27 to the endoplasmic reticulum and ERG29 regulates the activity of the iron-containing C4-methylsterol oxidase ERG25. Then, the sterol 24-C-methyltransferase ERG6 catalyzes the methyl transfer from S-adenosyl-methionine to the C-24 of zymosterol to form fecosterol. The C-8 sterol isomerase ERG2 catalyzes the reaction which results in unsaturation at C-7 in the B ring of sterols and thus converts fecosterol to episterol. The sterol-C5-desaturase ERG3 then catalyzes the introduction of a C-5 double bond in the B ring to produce 5-dehydroepisterol. The C-22 sterol desaturase ERG5 further converts 5-dehydroepisterol into ergosta-5,7,22,24(28)-tetraen-3beta-ol by forming the C-22(23) double bond in the sterol side chain. Finally, ergosta-5,7,22,24(28)-tetraen-3beta-ol is substrate of the C-24(28) sterol reductase ERG4 to produce ergosterol. In Saccharomyces cerevisiae (strain ATCC 204508 / S288c) (Baker's yeast), this protein is Ergosterol biosynthetic protein 28.